Consider the following 94-residue polypeptide: Small ribosomal subunit protein bS16 (94 aa).

Belongs to the bacterial ribosomal protein bS16 family.

The sequence is that of Small ribosomal subunit protein bS16 from Thermosipho africanus (strain TCF52B).